A 511-amino-acid chain; its full sequence is Pickpocket protein 19 (511 aa).

The next 2 helical transmembrane spans lie at 59–79 (LWLAIVLGAVITGFSLYTVLM) and 471–491 (GIISLYIGASVMSFIELLFVL).

It belongs to the amiloride-sensitive sodium channel (TC 1.A.6) family. In terms of tissue distribution, expressed in the tracheal system. Expressed in the taste-sensing terminal organ of the larval head. In adults, expressed in hairs on the tibia, femur and wing margin, but not in hairs on the tarsi of the leg.

The protein resides in the membrane. In terms of biological role, part of a complex that plays a role in tracheal liquid clearance. In both larvae and adults, contributes to the behavioral response to salt. Probable role in sodium transport. The sequence is that of Pickpocket protein 19 (ppk19) from Drosophila melanogaster (Fruit fly).